The primary structure comprises 383 residues: Probable endopolygalacturonase C (383 aa).

An N-terminal signal peptide occupies residues 1 to 16; the sequence is MVRQLILISSLLAAVA. Residues 17–40 constitute a propeptide that is removed on maturation; the sequence is VRAPADPAHPMVTEAPDVNLVEKR. Cysteine 44 and cysteine 62 are joined by a disulfide. PbH1 repeat units lie at residues 175 to 206 and 207 to 228; these read STDL…DIGE and STYI…AINS. Catalysis depends on aspartate 221, which acts as the Proton donor. An intrachain disulfide couples cysteine 223 to cysteine 239. Histidine 243 is an active-site residue. PbH1 repeat units lie at residues 253-279 and 287-309; these read RDDN…RIKT and VSEV…VIEQ. N-linked (GlcNAc...) asparagine glycosylation is present at asparagine 260. 2 disulfide bridges follow: cysteine 348–cysteine 353 and cysteine 372–cysteine 381.

The protein belongs to the glycosyl hydrolase 28 family.

The protein localises to the secreted. It catalyses the reaction (1,4-alpha-D-galacturonosyl)n+m + H2O = (1,4-alpha-D-galacturonosyl)n + (1,4-alpha-D-galacturonosyl)m.. Functionally, involved in maceration and soft-rotting of plant tissue. Hydrolyzes the 1,4-alpha glycosidic bonds of de-esterified pectate in the smooth region of the plant cell wall. The sequence is that of Probable endopolygalacturonase C (pgaC) from Aspergillus niger.